The chain runs to 445 residues: Glycine--tRNA ligase (445 aa).

Substrate-binding residues include Arg97 and Glu145. ATP is bound by residues 177 to 179 (RNE), 187 to 192 (FRTCEF), 262 to 263 (EV), and 308 to 311 (GLTR). 192–196 (FEQME) lines the substrate pocket. A substrate-binding site is contributed by 304-308 (ETSAG).

This sequence belongs to the class-II aminoacyl-tRNA synthetase family. Homodimer.

The protein localises to the cytoplasm. It carries out the reaction tRNA(Gly) + glycine + ATP = glycyl-tRNA(Gly) + AMP + diphosphate. Its function is as follows. Catalyzes the attachment of glycine to tRNA(Gly). The polypeptide is Glycine--tRNA ligase (Borreliella burgdorferi (strain ZS7) (Borrelia burgdorferi)).